A 358-amino-acid polypeptide reads, in one-letter code: Gibberellin 3-beta-dioxygenase 1 (358 aa).

The Fe2OG dioxygenase domain occupies 204–308; sequence DLNWAQAALQ…RLSVAFLWGP (105 aa). Residues His232, Asp234, and His289 each coordinate Fe cation. Arg299 is an active-site residue.

It belongs to the iron/ascorbate-dependent oxidoreductase family. GA3OX subfamily. It depends on L-ascorbate as a cofactor. The cofactor is Fe cation. Expressed in stems, roots, leaves, flowers, and siliques. Highly expressed near the nodes in stems and in the stamen filaments of flowers. Detected in developing cotyledons, vegetative shoot apical meristem and non-meristematic, non-elongation regions of the roots. Found in the cortex and the endodermis of the embryo axis in germinating seeds and in the placenta in developing siliques.

The enzyme catalyses gibberellin A9 + 2-oxoglutarate + O2 = gibberellin A4 + succinate + CO2. It carries out the reaction gibberellin A20 + 2-oxoglutarate + O2 = gibberellin A1 + succinate + CO2. The protein operates within plant hormone biosynthesis; gibberellin biosynthesis. Its function is as follows. Converts the inactive gibberellin (GA) precursors GA9 and GA20 into the bioactives gibberellins GA4 and GA1, respectively. Involved in the production of bioactive GA for vegetative growth and development. The protein is Gibberellin 3-beta-dioxygenase 1 (GA3OX1) of Arabidopsis thaliana (Mouse-ear cress).